The primary structure comprises 60 residues: Large ribosomal subunit protein uL30 (60 aa).

The protein belongs to the universal ribosomal protein uL30 family. As to quaternary structure, part of the 50S ribosomal subunit.

The polypeptide is Large ribosomal subunit protein uL30 (Streptococcus pyogenes serotype M1).